Consider the following 385-residue polypeptide: uncharacterized protein (385 aa).

Lysine 194 is subject to N6-(pyridoxal phosphate)lysine.

Belongs to the class-V pyridoxal-phosphate-dependent aminotransferase family. It depends on pyridoxal 5'-phosphate as a cofactor.

This is an uncharacterized protein from Methanocaldococcus jannaschii (strain ATCC 43067 / DSM 2661 / JAL-1 / JCM 10045 / NBRC 100440) (Methanococcus jannaschii).